Here is a 308-residue protein sequence, read N- to C-terminus: Mycothiol acetyltransferase (308 aa).

2 N-acetyltransferase domains span residues 16–152 (ETLA…RPLA) and 165–308 (VTVR…RTES). Residue Glu47 coordinates 1D-myo-inositol 2-(L-cysteinylamino)-2-deoxy-alpha-D-glucopyranoside. 91 to 93 (LVV) provides a ligand contact to acetyl-CoA. Positions 192, 231, and 240 each coordinate 1D-myo-inositol 2-(L-cysteinylamino)-2-deoxy-alpha-D-glucopyranoside. Acetyl-CoA is bound by residues 244-246 (LGV) and 251-257 (QGGGLGK). 1D-myo-inositol 2-(L-cysteinylamino)-2-deoxy-alpha-D-glucopyranoside is bound at residue Tyr278.

This sequence belongs to the acetyltransferase family. MshD subfamily. As to quaternary structure, monomer.

It carries out the reaction 1D-myo-inositol 2-(L-cysteinylamino)-2-deoxy-alpha-D-glucopyranoside + acetyl-CoA = mycothiol + CoA + H(+). Catalyzes the transfer of acetyl from acetyl-CoA to desacetylmycothiol (Cys-GlcN-Ins) to form mycothiol. The protein is Mycothiol acetyltransferase of Streptomyces avermitilis (strain ATCC 31267 / DSM 46492 / JCM 5070 / NBRC 14893 / NCIMB 12804 / NRRL 8165 / MA-4680).